We begin with the raw amino-acid sequence, 278 residues long: HTH-type transcriptional activator RhaS (278 aa).

The 99-residue stretch at 174 to 272 (NQLMAWLEDH…NWSPRDIRQG (99 aa)) folds into the HTH araC/xylS-type domain. 2 consecutive DNA-binding regions (H-T-H motif) follow at residues 191 to 212 (EAVA…KQHT) and 239 to 262 (VTEI…RREF).

Binds DNA as a dimer.

The protein resides in the cytoplasm. Functionally, activates expression of the rhaBAD and rhaT operons. The polypeptide is HTH-type transcriptional activator RhaS (Salmonella dublin (strain CT_02021853)).